The following is a 338-amino-acid chain: Isopenicillin N synthase (338 aa).

The isopenicillin N site is built by Arg-89, Tyr-93, Ser-185, and Tyr-191. Arg-89, Tyr-93, Ser-185, Tyr-191, His-216, and Asp-218 together coordinate N-[(5S)-5-amino-5-carboxypentanoyl]-L-cysteinyl-D-valine. Residues 182-290 form the Fe2OG dioxygenase domain; the sequence is TLSSVVLIRY…RQSLPFFVNL (109 aa). Fe(2+) is bound by residues His-216, Asp-218, and His-272. Arg-281 lines the 2-oxoglutarate pocket. Residue Ser-283 participates in isopenicillin N binding. Residue Ser-283 coordinates N-[(5S)-5-amino-5-carboxypentanoyl]-L-cysteinyl-D-valine.

Belongs to the iron/ascorbate-dependent oxidoreductase family. In terms of assembly, monomer. Fe(2+) is required as a cofactor.

It localises to the cytoplasm. Its subcellular location is the cytosol. The catalysed reaction is N-[(5S)-5-amino-5-carboxypentanoyl]-L-cysteinyl-D-valine + O2 = isopenicillin N + 2 H2O. It participates in antibiotic biosynthesis; penicillin G biosynthesis; penicillin G from L-alpha-aminoadipate and L-cysteine and L-valine: step 2/3. Isopenicillin N synthase; part of the gene cluster that mediates the biosynthesis of penicillin, the world's most important antibiotic. IpnA catalyzes the cyclization of the tripeptide N-[(5S)-5-amino-5-carboxypentanoyl]-L-cysteinyl-D-valine (LLD-ACV or ACV) to form isopenicillin N (IPN) that contains the beta-lactam nucleus. The penicillin biosynthesis occurs via 3 enzymatic steps, the first corresponding to the production of the tripeptide N-[(5S)-5-amino-5-carboxypentanoyl]-L-cysteinyl-D-valine (LLD-ACV or ACV) by the NRPS pcbAB. The tripeptide ACV is then cyclized to isopenicillin N (IPN) by the isopenicillin N synthase pcbC that forms the beta-lactam nucleus. Finally, the alpha-aminoadipyl side chain is exchanged for phenylacetic acid by the isopenicillin N acyltransferase penDE to yield penicillin in the peroxisomal matrix. The protein is Isopenicillin N synthase (PCBC) of Hapsidospora chrysogena (Acremonium chrysogenum).